Reading from the N-terminus, the 359-residue chain is Nicotinate-nucleotide--dimethylbenzimidazole phosphoribosyltransferase (359 aa).

The active-site Proton acceptor is the Glu-318.

This sequence belongs to the CobT family. As to quaternary structure, homodimer.

It carries out the reaction 5,6-dimethylbenzimidazole + nicotinate beta-D-ribonucleotide = alpha-ribazole 5'-phosphate + nicotinate + H(+). Its pathway is nucleoside biosynthesis; alpha-ribazole biosynthesis; alpha-ribazole from 5,6-dimethylbenzimidazole: step 1/2. Functionally, catalyzes the synthesis of alpha-ribazole-5'-phosphate from nicotinate mononucleotide (NAMN) and 5,6-dimethylbenzimidazole (DMB). This Escherichia coli (strain SMS-3-5 / SECEC) protein is Nicotinate-nucleotide--dimethylbenzimidazole phosphoribosyltransferase.